The primary structure comprises 201 residues: Small ribosomal subunit protein uS4 (201 aa).

An S4 RNA-binding domain is found at 91–157; it reads SRLDNVVYRA…LPFQVARETV (67 aa).

The protein belongs to the universal ribosomal protein uS4 family. Part of the 30S ribosomal subunit. Contacts protein S5. The interaction surface between S4 and S5 is involved in control of translational fidelity.

One of the primary rRNA binding proteins, it binds directly to 16S rRNA where it nucleates assembly of the body of the 30S subunit. Its function is as follows. With S5 and S12 plays an important role in translational accuracy. The polypeptide is Small ribosomal subunit protein uS4 (Rhodococcus erythropolis (strain PR4 / NBRC 100887)).